The sequence spans 824 residues: A-adding tRNA nucleotidyltransferase (824 aa).

2 consecutive CBS domains span residues 305–363 (MNTP…DEPI) and 367–423 (VNRD…LEKL). ATP is bound at residue 459 to 462 (GVVR). Mg(2+) is bound by residues aspartate 472 and aspartate 474. Residues 545 to 546 (RD), asparagine 550, 590 to 599 (DPVRILRALR), arginine 603, and arginine 632 each bind ATP.

It belongs to the tRNA nucleotidyltransferase/poly(A) polymerase family. Mg(2+) serves as cofactor.

It catalyses the reaction a tRNA with a 3' CC end + ATP = a tRNA with a 3' CCA end + diphosphate. Its function is as follows. tRNA nucleotidyltransferase involved in the synthesis of the tRNA CCA terminus. Adds the terminal adenosine residue to tRNA. Can incorporate CMP into tRNA ending with C74C75 (tRNACC), with very weak efficiency. The chain is A-adding tRNA nucleotidyltransferase from Aquifex aeolicus (strain VF5).